The primary structure comprises 416 residues: E3 ubiquitin-protein ligase RNFT1 (416 aa).

2 disordered regions span residues 1 to 50 and 68 to 117; these read MKHR…MSLP and DLSS…DSRE. The span at 7-19 shows a compositional bias: basic and acidic residues; that stretch reads HERQSSTESKNLK. Polar residues-rich tracts occupy residues 20-45 and 68-80; these read ETTQ…SPSA and DLSS…VARS. Over residues 81–100 the composition is skewed to basic residues; the sequence is NSRRVRPSTHGRSPSRHGHT. 6 helical membrane-spanning segments follow: residues 146–166, 184–204, 214–234, 237–257, 265–287, and 302–322; these read LVVQ…TFLY, LQCL…YYTF, VFMN…VVGI, FIGK…PSFV, YWYM…PVWF, and WHFG…IIFG. The tract at residues 349-400 is required for ubiquitin ligase activity and for protection against ER stress-induced cell death; sequence CSEADGMCAICQAEFTKPIALICQHVFCEECISSWFNKEKTCPLCRTLISNH. The segment at 356–394 adopts an RING-type zinc-finger fold; sequence CAICQAEFTKPIALICQHVFCEECISSWFNKEKTCPLCR.

The protein localises to the endoplasmic reticulum membrane. It carries out the reaction S-ubiquitinyl-[E2 ubiquitin-conjugating enzyme]-L-cysteine + [acceptor protein]-L-lysine = [E2 ubiquitin-conjugating enzyme]-L-cysteine + N(6)-ubiquitinyl-[acceptor protein]-L-lysine.. Its pathway is protein modification; protein ubiquitination. E3 ubiquitin-protein ligase that acts in the endoplasmic reticulum (ER)-associated degradation (ERAD) pathway, which targets misfolded proteins that accumulate in the endoplasmic reticulum (ER) for ubiquitination and subsequent proteasome-mediated degradation. Protects cells from ER stress-induced apoptosis. In Xenopus laevis (African clawed frog), this protein is E3 ubiquitin-protein ligase RNFT1 (rnft1).